Here is a 103-residue protein sequence, read N- to C-terminus: Large ribosomal subunit protein bL21 (103 aa).

It belongs to the bacterial ribosomal protein bL21 family. As to quaternary structure, part of the 50S ribosomal subunit. Contacts protein L20.

In terms of biological role, this protein binds to 23S rRNA in the presence of protein L20. The sequence is that of Large ribosomal subunit protein bL21 from Burkholderia ambifaria (strain MC40-6).